A 118-amino-acid polypeptide reads, in one-letter code: Large ribosomal subunit protein uL18 (118 aa).

A disordered region spans residues 1–25 (MISKPDKNKIRQKRHRRVRGKLSGT). A compositionally biased stretch (basic residues) spans 10–20 (IRQKRHRRVRG).

It belongs to the universal ribosomal protein uL18 family. Part of the 50S ribosomal subunit; part of the 5S rRNA/L5/L18/L25 subcomplex. Contacts the 5S and 23S rRNAs.

In terms of biological role, this is one of the proteins that bind and probably mediate the attachment of the 5S RNA into the large ribosomal subunit, where it forms part of the central protuberance. The sequence is that of Large ribosomal subunit protein uL18 from Streptococcus pyogenes serotype M5 (strain Manfredo).